A 429-amino-acid chain; its full sequence is Glutamyl-tRNA reductase (429 aa).

Substrate contacts are provided by residues 49 to 52 (TCNR), Ser-107, 112 to 114 (EPQ), and Gln-118. Cys-50 functions as the Nucleophile in the catalytic mechanism. Position 187–192 (187–192 (GAGKTI)) interacts with NADP(+).

This sequence belongs to the glutamyl-tRNA reductase family. Homodimer.

It catalyses the reaction (S)-4-amino-5-oxopentanoate + tRNA(Glu) + NADP(+) = L-glutamyl-tRNA(Glu) + NADPH + H(+). It functions in the pathway porphyrin-containing compound metabolism; protoporphyrin-IX biosynthesis; 5-aminolevulinate from L-glutamyl-tRNA(Glu): step 1/2. Catalyzes the NADPH-dependent reduction of glutamyl-tRNA(Glu) to glutamate 1-semialdehyde (GSA). The protein is Glutamyl-tRNA reductase of Marinobacter nauticus (strain ATCC 700491 / DSM 11845 / VT8) (Marinobacter aquaeolei).